A 455-amino-acid polypeptide reads, in one-letter code: Asparagine--tRNA ligase (455 aa).

Belongs to the class-II aminoacyl-tRNA synthetase family. Homodimer.

It localises to the cytoplasm. It carries out the reaction tRNA(Asn) + L-asparagine + ATP = L-asparaginyl-tRNA(Asn) + AMP + diphosphate + H(+). The chain is Asparagine--tRNA ligase from Mycoplasma pneumoniae (strain ATCC 29342 / M129 / Subtype 1) (Mycoplasmoides pneumoniae).